Reading from the N-terminus, the 194-residue chain is Imidazole glycerol phosphate synthase subunit HisH (194 aa).

Positions 1–194 (MIIIDTGCAN…QLLKNFVENL (194 aa)) constitute a Glutamine amidotransferase type-1 domain. Catalysis depends on Cys75, which acts as the Nucleophile. Catalysis depends on residues His175 and Glu177.

As to quaternary structure, heterodimer of HisH and HisF.

It localises to the cytoplasm. It carries out the reaction 5-[(5-phospho-1-deoxy-D-ribulos-1-ylimino)methylamino]-1-(5-phospho-beta-D-ribosyl)imidazole-4-carboxamide + L-glutamine = D-erythro-1-(imidazol-4-yl)glycerol 3-phosphate + 5-amino-1-(5-phospho-beta-D-ribosyl)imidazole-4-carboxamide + L-glutamate + H(+). The enzyme catalyses L-glutamine + H2O = L-glutamate + NH4(+). It functions in the pathway amino-acid biosynthesis; L-histidine biosynthesis; L-histidine from 5-phospho-alpha-D-ribose 1-diphosphate: step 5/9. Its function is as follows. IGPS catalyzes the conversion of PRFAR and glutamine to IGP, AICAR and glutamate. The HisH subunit catalyzes the hydrolysis of glutamine to glutamate and ammonia as part of the synthesis of IGP and AICAR. The resulting ammonia molecule is channeled to the active site of HisF. This is Imidazole glycerol phosphate synthase subunit HisH from Mannheimia succiniciproducens (strain KCTC 0769BP / MBEL55E).